The chain runs to 389 residues: Acetate kinase (389 aa).

Asn-7 contributes to the Mg(2+) binding site. ATP is bound at residue Lys-14. Arg-88 is a substrate binding site. Catalysis depends on Asp-145, which acts as the Proton donor/acceptor. ATP is bound by residues 205-209, 279-281, and 324-328; these read HLGNG, DLR, and GIGEN. Glu-375 contacts Mg(2+).

The protein belongs to the acetokinase family. Homodimer. Mg(2+) serves as cofactor. It depends on Mn(2+) as a cofactor.

It is found in the cytoplasm. The enzyme catalyses acetate + ATP = acetyl phosphate + ADP. Its pathway is metabolic intermediate biosynthesis; acetyl-CoA biosynthesis; acetyl-CoA from acetate: step 1/2. Functionally, catalyzes the formation of acetyl phosphate from acetate and ATP. Can also catalyze the reverse reaction. The chain is Acetate kinase from Sulfurimonas denitrificans (strain ATCC 33889 / DSM 1251) (Thiomicrospira denitrificans (strain ATCC 33889 / DSM 1251)).